A 249-amino-acid polypeptide reads, in one-letter code: 5'-nucleotidase SurE (249 aa).

A divalent metal cation-binding residues include aspartate 9, aspartate 10, serine 40, and asparagine 92.

The protein belongs to the SurE nucleotidase family. A divalent metal cation serves as cofactor.

It is found in the cytoplasm. The enzyme catalyses a ribonucleoside 5'-phosphate + H2O = a ribonucleoside + phosphate. Functionally, nucleotidase that shows phosphatase activity on nucleoside 5'-monophosphates. This chain is 5'-nucleotidase SurE, found in Shewanella frigidimarina (strain NCIMB 400).